A 246-amino-acid polypeptide reads, in one-letter code: tRNA (guanine-N(1)-)-methyltransferase (246 aa).

S-adenosyl-L-methionine-binding positions include Gly-113 and 133-138 (IGDYVL).

Belongs to the RNA methyltransferase TrmD family. As to quaternary structure, homodimer.

It localises to the cytoplasm. It carries out the reaction guanosine(37) in tRNA + S-adenosyl-L-methionine = N(1)-methylguanosine(37) in tRNA + S-adenosyl-L-homocysteine + H(+). In terms of biological role, specifically methylates guanosine-37 in various tRNAs. The protein is tRNA (guanine-N(1)-)-methyltransferase of Haemophilus influenzae (strain 86-028NP).